Reading from the N-terminus, the 969-residue chain is MAFALGQRWISDTESDLGLGTVVALDARTVTLMFAASEENRVYASNDAPVTRVVFNVGDVVECQEGWSLKVEQVVEENGLYTYLGMREDTEETGVALREIFLSNQIRFNKPQDKMYAGQIDRMDNFVLRYRALKNQYEQHRSPMRGLCGMRAGLIPHQLYIAHEVGRRHAPRVLLADEVGLGKTIEAGMIIHQQVLLGRAERILIVVPETLQHQWLVEMMRRFNLHFSIFDEERCIEAFAESDNPFDTQQYVLCSLDFLRKSRKRFEQALEADWDLLVVDEAHHLEWSQDKPSRGYQVVEGLAERTPGVLLLTATPEQLGRESHFARLRLLDSDRFYDYAAFVEEEAQYAPVADAITALFSGVKLADEAKNQITELLSEQDVEPLFRIIESNADEESKAIARQELIDNLMDRHGTGRVLFRNTRAAIKGFPVRNVHLLPMPIPTQYTTSMRVSGMIGGKLAPEARAMKNLYPEEIFQEFEGEESSWWQFDCRVNWLLEKLKAQRSEKVLVIASRASTALQLEQALREREGIRATVFHEGMSILERDKAAAYFAQEEGGAQVLICSEIGSEGRNFQFANQLVMFDLPFNPDLLEQRIGRLDRIGQKRDIDIHVPYLQGTAQEVLARWFNEGLNAFAETCPTGRTVYDQVSDQLIEMLASGSNEALNDVIAESAKLNQALKADLEQGRDRLLEMHSNGGEKAQQIVAEIAAKDGDTNLVSFALSLFDTIGLNQDDKGENAIVVTPSEHMMVPSYPGLPYEGATITFDRDTALSREDMHFISWEHPMIQGGIDLLMSEGVGTCAVSLLKNKALPVGTLLLELIYAVDAQAPKRSGIGRFLPRTPIRLMMDARGNDLSAQVEFESFNRQLSPVNRHLASKLVSSVQNDIHRLIEAGDQLVVENVEAIRQQAQQEMQQSLNSELERLQALKAVNPNIRDEEIEAIDAQIKELNGYIAKAQFQLDSLRLIVVSHN.

The Helicase ATP-binding domain maps to 164 to 334 (EVGRRHAPRV…FARLRLLDSD (171 aa)). Position 177 to 184 (177 to 184 (DEVGLGKT)) interacts with ATP. Positions 280–283 (DEAH) match the DEAH box motif. The Helicase C-terminal domain maps to 492–668 (RVNWLLEKLK…GSNEALNDVI (177 aa)).

Belongs to the SNF2/RAD54 helicase family. RapA subfamily. In terms of assembly, interacts with the RNAP. Has a higher affinity for the core RNAP than for the holoenzyme. Its ATPase activity is stimulated by binding to RNAP.

Functionally, transcription regulator that activates transcription by stimulating RNA polymerase (RNAP) recycling in case of stress conditions such as supercoiled DNA or high salt concentrations. Probably acts by releasing the RNAP, when it is trapped or immobilized on tightly supercoiled DNA. Does not activate transcription on linear DNA. Probably not involved in DNA repair. The polypeptide is RNA polymerase-associated protein RapA (Vibrio vulnificus (strain YJ016)).